The following is a 346-amino-acid chain: Phosphoribosylformylglycinamidine cyclo-ligase (346 aa).

The protein belongs to the AIR synthase family.

It localises to the cytoplasm. The catalysed reaction is 2-formamido-N(1)-(5-O-phospho-beta-D-ribosyl)acetamidine + ATP = 5-amino-1-(5-phospho-beta-D-ribosyl)imidazole + ADP + phosphate + H(+). It participates in purine metabolism; IMP biosynthesis via de novo pathway; 5-amino-1-(5-phospho-D-ribosyl)imidazole from N(2)-formyl-N(1)-(5-phospho-D-ribosyl)glycinamide: step 2/2. The polypeptide is Phosphoribosylformylglycinamidine cyclo-ligase (Bacillus anthracis (strain A0248)).